The sequence spans 595 residues: MEPAAPSCNMIMIADQASVNAHGRHLDENRVYPSDKVPAHVANKILESGTETVRCDLTLEDMLGDYEYDDPTEEEKILMDRIADHVGNDNSDMAIKHAAVRSVLLSCKIAHLMIKQNYQSAINSATNILCQLANDIFERIERQRKMIYGCFRSEFDNVQLGRLMYDMYPHFMPTNLGPSEKRVWMSYVGEAIVAATNIDHALDERAAWAKTDCSLPGEFKPELCVLVGAIRRLHDPPCYTKPFLDAKSQLAVWQQMKAIESESVSTHVVVVEALKLRENLAKAVQETIAYERHQYHRVCQMMCNNMKDHLETTCMLARGRTLATLADLRSTRYNLALFLLSEMHIFDSFTMPRIRGAMKQARCMSYVERTISLAKFRELADRVHNRSAPSPQGVIEEQQQAGEEEQQQQQEIEYDPEMPPLEREEEQEDEQVEEEPPADEEEGGAVGGVTQEEPAGEATEEAEEDESQPGPSDNQVVPESSETPTPAEDEETQSADEGESQELEGSQQLILSRPAAPLTDSETDSDSEDDDEVTRIPVGFSLMTSPVLQPTTRSATAAASSGTAPRPALKRQYAMVHTRSKSSENQQQPKKKSKK.

Residues 384 to 595 (HNRSAPSPQG…QQQPKKKSKK (212 aa)) form a disordered region. Positions 392-401 (QGVIEEQQQA) are enriched in low complexity. Composition is skewed to acidic residues over residues 402 to 416 (GEEE…EYDP), 423 to 443 (REEE…EEEG), and 454 to 467 (PAGE…EDES). Residues 469 to 484 (PGPSDNQVVPESSETP) are compositionally biased toward polar residues. Residues 487 to 502 (AEDEETQSADEGESQE) show a composition bias toward acidic residues. The segment covering 503-512 (LEGSQQLILS) has biased composition (low complexity). Over residues 521–532 (SETDSDSEDDDE) the composition is skewed to acidic residues. Low complexity predominate over residues 550 to 567 (PTTRSATAAASSGTAPRP).

It is found in the host nucleus. The IE1 protein has some additive effect on the trans-activating properties of the IE3 protein. This Mus musculus (Mouse) protein is Immediate-early protein 1 (IE1).